The chain runs to 336 residues: DNA topoisomerase 1B (336 aa).

The 258-residue stretch at 79 to 336 (EIHIQGAEKE…KSYRKDVLGE (258 aa)) folds into the Topo IB-type catalytic domain. Y294 functions as the O-(3'-phospho-DNA)-tyrosine intermediate in the catalytic mechanism.

The protein belongs to the type IB topoisomerase family. Monomer.

It is found in the virion. It carries out the reaction ATP-independent breakage of single-stranded DNA, followed by passage and rejoining.. Releases the supercoiling and torsional tension of DNA introduced during the DNA replication and transcription by transiently cleaving and rejoining one strand of the DNA duplex. Introduces a single-strand break via transesterification at a target site in duplex DNA. The scissile phosphodiester is attacked by the catalytic tyrosine of the enzyme, resulting in the formation of a DNA-(3'-phosphotyrosyl)-enzyme intermediate and the expulsion of a 5'-OH DNA strand. The free DNA strand then undergoes passage around the unbroken strand thus removing DNA supercoils. Finally, in the religation step, the DNA 5'-OH attacks the covalent intermediate to expel the active-site tyrosine and restore the DNA phosphodiester backbone. Cleaves DNA after CCCTT sequence. The sequence is that of DNA topoisomerase 1B (TOP1E) from Acanthamoeba polyphaga mimivirus (APMV).